Reading from the N-terminus, the 217-residue chain is CASP-like protein UU4 (217 aa).

Positions 1–11 (MYTGQSDHRPE) are enriched in basic and acidic residues. Positions 1–21 (MYTGQSDHRPEGVGVNPGSPN) are disordered. The Cytoplasmic portion of the chain corresponds to 1 to 61 (MYTGQSDHRP…VKKNINHMSG (61 aa)). Residues 62–82 (LSLGLRVSEFVLSVIAFSLMA) form a helical membrane-spanning segment. The Extracellular segment spans residues 83-98 (SAEQNGAVYSTFTSYS). A helical membrane pass occupies residues 99-119 (FVLAINVLVALYAIGQIILSV). The Cytoplasmic segment spans residues 120–141 (MPLVSGSAPKKLYLFITFGCDQ). The helical transmembrane segment at 142–162 (LSAFLLMAAGAAGASVAMLIN) threads the bilayer. At 163–187 (RKGVIDDYGSGCIDGKITVFCAHAE) the chain is on the extracellular side. Residues 188 to 208 (ASIAFTFLSFFCVMISSYLGV) form a helical membrane-spanning segment. At 209 to 217 (YNLAPYLIL) the chain is on the cytoplasmic side.

Belongs to the Casparian strip membrane proteins (CASP) family. As to quaternary structure, homodimer and heterodimers.

It localises to the cell membrane. The protein is CASP-like protein UU4 of Physcomitrium patens (Spreading-leaved earth moss).